Consider the following 58-residue polypeptide: Small integral membrane protein 11 (58 aa).

A helical transmembrane segment spans residues 10–32 (PLLLYILAAKTLILCLTFAGVKM). Residues 29 to 58 (GVKMYQRKRLEAKQQKLEAERKKQSEKKDN) adopt a coiled-coil conformation.

Expressed in heart, spleen, liver, stomach, muscle, lung, testis, skin, PBL and bone marrow.

The protein resides in the membrane. The chain is Small integral membrane protein 11 from Homo sapiens (Human).